Consider the following 787-residue polypeptide: Endonuclease MutS2 (787 aa).

ATP is bound at residue 334-341 (GPNTGGKT). Residues 685-709 (KAQDPAKSAKQPRASVKRSGSSGMS) are disordered. A Smr domain is found at 712 to 787 (LDLRGHRYEE…GDGSTVVHFK (76 aa)).

Belongs to the DNA mismatch repair MutS family. MutS2 subfamily. In terms of assembly, homodimer. Binds to stalled ribosomes, contacting rRNA.

Functionally, endonuclease that is involved in the suppression of homologous recombination and thus may have a key role in the control of bacterial genetic diversity. Acts as a ribosome collision sensor, splitting the ribosome into its 2 subunits. Detects stalled/collided 70S ribosomes which it binds and splits by an ATP-hydrolysis driven conformational change. Acts upstream of the ribosome quality control system (RQC), a ribosome-associated complex that mediates the extraction of incompletely synthesized nascent chains from stalled ribosomes and their subsequent degradation. Probably generates substrates for RQC. The protein is Endonuclease MutS2 of Levilactobacillus brevis (strain ATCC 367 / BCRC 12310 / CIP 105137 / JCM 1170 / LMG 11437 / NCIMB 947 / NCTC 947) (Lactobacillus brevis).